The following is a 368-amino-acid chain: Trans-enoyl reductase TwmE (368 aa).

49-52 is an NADP(+) binding site; that stretch reads SDYK. Position 135–142 (135–142) interacts with substrate; that stretch reads FKAATLGT. NADP(+) is bound by residues 204 to 207, Tyr-222, and 269 to 270; these read SPRS and LE. Position 290–294 (290–294) interacts with substrate; the sequence is SAELY. 360 to 361 is a binding site for NADP(+); the sequence is HP.

The protein belongs to the zinc-containing alcohol dehydrogenase family. In terms of assembly, monomer.

The protein operates within secondary metabolite biosynthesis. Its function is as follows. Trans-enoyl reductase; part of the gene cluster that mediates the biosynthesis of wortmanamides A and B, reduced long-chain polyketides amidated with a specific omega-amino acid, 5-aminopentanoic acid (5PA). The PKS modules of TwmB are involved in the synthesis of the polyketide backbone, whereas the non-canonical C domain of TwmB is a bonafide condensation domain that specifically selects 5PA and catalyzes amidation to release polyketide chain. The C domain clearly prefers C16 and C18 fatty acyl substrates, which is consistent with simultaneous formation of both octaketide and nonaketide acyl amides wortmanamides A and B. Because TwmB lacks a designated enoylreductase (ER) domain, the required activity is provided the enoyl reductase TwmE. The roles of the remaining enzymes have still to be clarified. This chain is Trans-enoyl reductase TwmE, found in Talaromyces wortmannii (Penicillium wortmannii).